The primary structure comprises 325 residues: Leucine carboxyl methyltransferase 1 (325 aa).

Residues R79, G104, D127, 174 to 175, and E200 contribute to the S-adenosyl-L-methionine site; that span reads DL.

This sequence belongs to the methyltransferase superfamily. LCMT family.

The catalysed reaction is [phosphatase 2A protein]-C-terminal L-leucine + S-adenosyl-L-methionine = [phosphatase 2A protein]-C-terminal L-leucine methyl ester + S-adenosyl-L-homocysteine. Methylates the carboxyl group of the C-terminal leucine residue of protein phosphatase 2A catalytic subunits to form alpha-leucine ester residues. The polypeptide is Leucine carboxyl methyltransferase 1 (PPM1) (Eremothecium gossypii (strain ATCC 10895 / CBS 109.51 / FGSC 9923 / NRRL Y-1056) (Yeast)).